The chain runs to 249 residues: Derlin-2.1 (249 aa).

Residues 1-21 (MAQAVEEWYRQMPIITRSYLT) lie on the Cytoplasmic side of the membrane. The helical transmembrane segment at 22-42 (AAVVTTVGCTLEIISPYHLYL) threads the bilayer. The Lumenal portion of the chain corresponds to 43 to 96 (NPKLVVQHYEIWRLVTNFLYFRKMDLDFLFHMFFLARYCKLLEENSFRGRTADF). The helical transmembrane segment at 97–117 (FYMLLFGATVLTSIVLIGGMI) threads the bilayer. Residues 118–122 (PYISE) lie on the Cytoplasmic side of the membrane. Residues 123 to 143 (TFARILFLSNSLTFMMVYVWS) traverse the membrane as a helical segment. At 144-152 (KHNPFIHMS) the chain is on the lumenal side. Residues 153-173 (FLGLFTFTAAYLPWVLLGFSI) traverse the membrane as a helical segment. The Cytoplasmic segment spans residues 174-249 (LVGSSTWVDL…GAMGLDPQAQ (76 aa)).

The protein belongs to the derlin family. As to expression, expressed in roots, stalks, leaves, embryo and endosperm.

The protein localises to the endoplasmic reticulum membrane. In terms of biological role, may be involved in the degradation process of specific misfolded endoplasmic reticulum (ER) luminal proteins. This Zea mays (Maize) protein is Derlin-2.1 (DER2.1).